The chain runs to 386 residues: Hemagglutinin-esterase (386 aa).

The signal sequence occupies residues 1-11 (MLIIFLFFYFC). Positions 1 to 121 (MLIIFLFFYF…SNDVWLLNKV (121 aa)) are esterase domain 1. Topologically, residues 12–359 (YGFNEPLNVV…PICVYDFLPI (348 aa)) are virion surface. Residue serine 34 is the Nucleophile of the active site. Cysteine 38 and cysteine 59 are disulfide-bonded. Residues asparagine 83, asparagine 110, asparagine 145, and asparagine 168 are each glycosylated (N-linked (GlcNAc...) asparagine; by host). Residues cysteine 107 and cysteine 154 are joined by a disulfide bond. A receptor binding region spans residues 122–236 (RFYRALYSNM…GSYKVSTTAP (115 aa)). Cystine bridges form between cysteine 180–cysteine 246, cysteine 188–cysteine 219, and cysteine 277–cysteine 282. Positions 237–349 (FLSLPTKALC…RCPTSSIIKH (113 aa)) are esterase domain 2. An N-linked (GlcNAc...) asparagine; by host glycan is attached at asparagine 286. Residues aspartate 296 and histidine 299 each act as charge relay system in the active site. Residues cysteine 317 and cysteine 341 are joined by a disulfide bond. An N-linked (GlcNAc...) asparagine; by host glycan is attached at asparagine 328. Residues 360–380 (ILQGILLCLALLFVVFLLFLL) traverse the membrane as a helical segment. The Intravirion segment spans residues 381 to 386 (YNDKSH).

This sequence belongs to the influenza type C/coronaviruses hemagglutinin-esterase family. As to quaternary structure, homodimer; disulfide-linked. Forms a complex with the M protein in the pre-Golgi. Associates then with S-M complex to form a ternary complex S-M-HE. Post-translationally, N-glycosylated in the host RER.

It localises to the virion membrane. Its subcellular location is the host cell membrane. The catalysed reaction is N-acetyl-9-O-acetylneuraminate + H2O = N-acetylneuraminate + acetate + H(+). It carries out the reaction N-acetyl-4-O-acetylneuraminate + H2O = N-acetylneuraminate + acetate + H(+). Structural protein that makes short spikes at the surface of the virus. Contains receptor binding and receptor-destroying activities. Mediates de-O-acetylation of N-acetyl-4-O-acetylneuraminic acid, which is probably the receptor determinant recognized by the virus on the surface of erythrocytes and susceptible cells. This receptor-destroying activity is important for virus release as it probably helps preventing self-aggregation and ensures the efficient spread of the progeny virus from cell to cell. May serve as a secondary viral attachment protein for initiating infection, the spike protein being the major one. May become a target for both the humoral and the cellular branches of the immune system. In Homo sapiens (Human), this protein is Hemagglutinin-esterase.